The sequence spans 627 residues: Monoterpene synthase like 1, chloroplastic (627 aa).

The N-terminal 50 residues, 1-50, are a transit peptide targeting the chloroplast; sequence MDLISVLPSTSKSCVCMHKPLSSSTHKLKPFCRTIRILGMPRPRKSVLMA. Residues D378, D382, and D530 each coordinate Mg(2+). The short motif at 378–382 is the DDXXD motif element; that stretch reads DDMYD.

It belongs to the terpene synthase family. Tpsd subfamily. Mg(2+) is required as a cofactor. It depends on Mn(2+) as a cofactor.

Its subcellular location is the plastid. It localises to the chloroplast. It participates in terpene metabolism; oleoresin biosynthesis. It functions in the pathway secondary metabolite biosynthesis; terpenoid biosynthesis. Its function is as follows. Monoterpene synthase (TPS) involved in the biosynthesis of monoterpene natural products included in conifer oleoresin secretions and volatile emissions; these compounds contribute to biotic and abiotic stress defense against herbivores and pathogens. The protein is Monoterpene synthase like 1, chloroplastic of Pinus contorta (Shore pine).